The sequence spans 321 residues: Ubiquitin-conjugating enzyme E2 U (321 aa).

The 150-residue stretch at 4-153 (RAYLLLHRDF…LRLFNRPLQM (150 aa)) folds into the UBC core domain. Residue cysteine 89 is the Glycyl thioester intermediate of the active site. Residues 285–321 (WKSDTSLYENDTDEPREEEVEDLISWTNTLNTNTSED) form a disordered region. Residues 294–306 (NDTDEPREEEVED) show a composition bias toward acidic residues. Polar residues predominate over residues 309 to 321 (SWTNTLNTNTSED).

The protein belongs to the ubiquitin-conjugating enzyme family. Post-translationally, autoubiquitinated in vitro in the presence of UBR5.

It catalyses the reaction S-ubiquitinyl-[E1 ubiquitin-activating enzyme]-L-cysteine + [E2 ubiquitin-conjugating enzyme]-L-cysteine = [E1 ubiquitin-activating enzyme]-L-cysteine + S-ubiquitinyl-[E2 ubiquitin-conjugating enzyme]-L-cysteine.. It functions in the pathway protein modification; protein ubiquitination. Its function is as follows. Catalyzes the covalent attachment of ubiquitin to other proteins. In Homo sapiens (Human), this protein is Ubiquitin-conjugating enzyme E2 U (UBE2U).